The primary structure comprises 603 residues: Probable L-gulonolactone oxidase 6 (603 aa).

Positions 1-35 (MAFTSSPSYGSLNAAFWRTIFVVHCISTLVFTTIS) are cleaved as a signal peptide. An FAD-binding PCMH-type domain is found at 64–246 (STCRAANVAY…SQVTLKLQPM (183 aa)).

This sequence belongs to the oxygen-dependent FAD-linked oxidoreductase family. FAD is required as a cofactor.

The catalysed reaction is L-gulono-1,4-lactone + O2 = L-ascorbate + H2O2 + H(+). It participates in cofactor biosynthesis; L-ascorbate biosynthesis. Its function is as follows. May be involved in the biosynthesis of ascorbic acid. The sequence is that of Probable L-gulonolactone oxidase 6 from Arabidopsis thaliana (Mouse-ear cress).